Reading from the N-terminus, the 704-residue chain is DNA ligase (704 aa).

NAD(+) contacts are provided by residues 43–47, 92–93, and glutamate 124; these read DADYD and SL. The N6-AMP-lysine intermediate role is filled by lysine 126. Arginine 147, glutamate 182, lysine 298, and lysine 322 together coordinate NAD(+). 4 residues coordinate Zn(2+): cysteine 427, cysteine 430, cysteine 445, and cysteine 451. The region spanning 625-704 is the BRCT domain; the sequence is PVESPIAGKI…DAWLRLIGDA (80 aa).

It belongs to the NAD-dependent DNA ligase family. LigA subfamily. Requires Mg(2+) as cofactor. Mn(2+) serves as cofactor.

The enzyme catalyses NAD(+) + (deoxyribonucleotide)n-3'-hydroxyl + 5'-phospho-(deoxyribonucleotide)m = (deoxyribonucleotide)n+m + AMP + beta-nicotinamide D-nucleotide.. Functionally, DNA ligase that catalyzes the formation of phosphodiester linkages between 5'-phosphoryl and 3'-hydroxyl groups in double-stranded DNA using NAD as a coenzyme and as the energy source for the reaction. It is essential for DNA replication and repair of damaged DNA. The sequence is that of DNA ligase from Cereibacter sphaeroides (strain ATCC 17025 / ATH 2.4.3) (Rhodobacter sphaeroides).